The following is a 1583-amino-acid chain: Protein mesh (1583 aa).

Positions 1–21 (MGVKIKLVLAVVLILSANVLG) are cleaved as a signal peptide. The Extracellular segment spans residues 22-1182 (QDEIVNDTES…EFSQRALFLT (1161 aa)). The 156-residue stretch at 260–415 (GIYFRLDRDL…GRHIFRIDEN (156 aa)) folds into the NIDO domain. An AMOP domain is found at 647–798 (GQRWSNSMCN…VGCETFRFER (152 aa)). Residues 811–1019 (GVAGIFGDPH…HWQLTDREQR (209 aa)) enclose the VWFD domain. Residues 1110–1170 (ISCGILETPR…PDYGYTECLR (61 aa)) form the Sushi domain. Intrachain disulfides connect Cys1112-Cys1152 and Cys1138-Cys1168. Residues 1183-1203 (WGVIVAVILPLGLLICLLWFW) traverse the membrane as a helical segment. Residues 1204–1472 (CWHKPRSEGK…QEYSSRTLGA (269 aa)) are Cytoplasmic-facing. Residues 1232–1250 (LRSSSMGNITDTMKSSTIP) show a composition bias toward polar residues. The tract at residues 1232–1448 (LRSSSMGNIT…IPEAPKSAPV (217 aa)) is disordered. The span at 1291 to 1300 (GKSDSGKSDK) shows a compositional bias: basic and acidic residues. The segment covering 1405-1416 (PIPSQYSPTYSE) has biased composition (polar residues). Residues 1473–1493 (TWGIISAVMLPIIIILICVAW) traverse the membrane as a helical segment. Topologically, residues 1494–1583 (RILQRRKAEE…RQWGGETEIN (90 aa)) are extracellular. Positions 1521-1539 (DSVKVTSDDESIPYKKDVT) are enriched in basic and acidic residues. The tract at residues 1521 to 1583 (DSVKVTSDDE…RQWGGETEIN (63 aa)) is disordered.

In fifth instar larvae, expressed in midgut epithelial cells (at protein level).

The protein resides in the membrane. Its subcellular location is the cell junction. It is found in the septate junction. The protein localises to the lateral cell membrane. Its function is as follows. May be required for the proper organization of smooth septate junctions and for the barrier function of the midgut epithelium. This is Protein mesh from Bombyx mori (Silk moth).